Consider the following 331-residue polypeptide: Activator of 90 kDa heat shock protein ATPase homolog 2 (331 aa).

The protein belongs to the AHA1 family.

Co-chaperone that stimulates HSP90 ATPase activity. The polypeptide is Activator of 90 kDa heat shock protein ATPase homolog 2 (Ahsa2) (Mus musculus (Mouse)).